The sequence spans 545 residues: CTP synthase (545 aa).

Residues 1-266 form an amidoligase domain region; the sequence is MTTRYIFVTG…DDLVVKRFGL (266 aa). Position 14 (Ser-14) interacts with CTP. Ser-14 contacts UTP. ATP-binding positions include 15–20 and Asp-72; that span reads SLGKGI. Residues Asp-72 and Glu-140 each coordinate Mg(2+). Residues 147–149, 187–192, and Lys-223 each bind CTP; these read DIE and KTKPTQ. UTP-binding positions include 187–192 and Lys-223; that span reads KTKPTQ. Residue 239–241 coordinates ATP; the sequence is KDV. Positions 291–542 constitute a Glutamine amidotransferase type-1 domain; it reads VIGMVGKYIE…IAAASAHQKR (252 aa). Gly-352 lines the L-glutamine pocket. Cys-379 (nucleophile; for glutamine hydrolysis) is an active-site residue. L-glutamine-binding positions include 380-383, Glu-403, and Arg-470; that span reads LGMQ. Catalysis depends on residues His-515 and Glu-517.

This sequence belongs to the CTP synthase family. Homotetramer.

The catalysed reaction is UTP + L-glutamine + ATP + H2O = CTP + L-glutamate + ADP + phosphate + 2 H(+). It carries out the reaction L-glutamine + H2O = L-glutamate + NH4(+). The enzyme catalyses UTP + NH4(+) + ATP = CTP + ADP + phosphate + 2 H(+). Its pathway is pyrimidine metabolism; CTP biosynthesis via de novo pathway; CTP from UDP: step 2/2. Its activity is regulated as follows. Allosterically activated by GTP, when glutamine is the substrate; GTP has no effect on the reaction when ammonia is the substrate. The allosteric effector GTP functions by stabilizing the protein conformation that binds the tetrahedral intermediate(s) formed during glutamine hydrolysis. Inhibited by the product CTP, via allosteric rather than competitive inhibition. Catalyzes the ATP-dependent amination of UTP to CTP with either L-glutamine or ammonia as the source of nitrogen. Regulates intracellular CTP levels through interactions with the four ribonucleotide triphosphates. This chain is CTP synthase, found in Shewanella baltica (strain OS223).